Reading from the N-terminus, the 878-residue chain is MTESFPSTSASSHSSARYDPIELETRWQKEWLRQGLDRTPVAETNQKRFYALSMFPYPSGKLHMGHVRNYVITDVIARVQRMRGDAVLHPMGWDAFGLPAENAAIARNVDPGDWTDQNIAQMRAQLDRLGLSIDWDRQQATCHQDYYRWTQWLFLELFAGGLAYQKEATVNWDPIDKTVLANEQVDGEGRSWRSGALVEQRQLKQWFLRITDYADALIDDLDELTGWPERVRTMQANWIGRSHGAEIKFRVAGQTNSIITVFTTRPDTLHGASYVVLAPEHPLVEALTSPQQRIAVTAFCDLISQLSVKDRTAEDQPKRGVPIGAQVINPVNGESLPVWIADYVLADYGSGAVMGVPAHDERDFIFARSHELPIRIVVQMPDSDEHHNDGQAWTGAGVLVNSGAFDGLSTEEGKVAITTHGASKGWAQSKVQYRLRDWLISRQRYWGCPIPIIHCASCGIVPVPQEDLPVTLPRDIDLSGKGGSPLAQEQDWVEVKCPICGEKAHRETDTMDTFMCSSWYYLRFADPLNSQRPFDKDIVDEWLPVDQYVGGIEHAILHLLYARFFTKALHDRNLIGFKEPFNTLLTQGMVQGLTYRNTKNGSYISPELVSDEGDPRDPESGDKLEILFEKMSKSKYNGVDPAVVIDRYGADTARMFILFKAPPEKDLEWDDADVEGQFRFLQRLIRLIDSFVWPKTDEDNASISSANLTISSADLSEEEINMRRATHMAIEAITEDLSGDIQLNTAISELMKLSNSLGGKLDKVRTEVAAEALSVLVRLMAPFAPHLAEEFWMKLHGQGSIHQQSWPIIDPSALVLETIELVIQVKGKVRGTIQVPANADKTALEELALKSDIAVKWLEGQSPRRVIIVPGKLVNLVP.

Residues 56-66 carry the 'HIGH' region motif; sequence PYPSGKLHMGH. The 'KMSKS' region signature appears at 630 to 634; sequence KMSKS. An ATP-binding site is contributed by Lys-633.

This sequence belongs to the class-I aminoacyl-tRNA synthetase family.

It is found in the cytoplasm. It carries out the reaction tRNA(Leu) + L-leucine + ATP = L-leucyl-tRNA(Leu) + AMP + diphosphate. The chain is Leucine--tRNA ligase from Prochlorococcus marinus (strain MIT 9303).